A 315-amino-acid polypeptide reads, in one-letter code: Cytosolic Fe-S cluster assembly factor nubp1-A (315 aa).

The disordered stretch occupies residues 1–23 (MADIPDNAPQHCPGTDSTEAGKS). 4 residues coordinate [4Fe-4S] cluster: Cys-12, Cys-26, Cys-29, and Cys-35. 66-73 (GKGGVGKS) contributes to the ATP binding site. [4Fe-4S] cluster contacts are provided by Cys-239 and Cys-242.

This sequence belongs to the Mrp/NBP35 ATP-binding proteins family. NUBP1/NBP35 subfamily. As to quaternary structure, heterotetramer of 2 nubp1 and 2 nubp2 chains. [4Fe-4S] cluster is required as a cofactor.

The protein resides in the cytoplasm. In terms of biological role, component of the cytosolic iron-sulfur (Fe/S) protein assembly (CIA) machinery. Required for maturation of extramitochondrial Fe-S proteins. The nubp1-nubp2 heterotetramer forms a Fe-S scaffold complex, mediating the de novo assembly of an Fe-S cluster and its transfer to target apoproteins. The polypeptide is Cytosolic Fe-S cluster assembly factor nubp1-A (nubp1-A) (Xenopus laevis (African clawed frog)).